A 674-amino-acid polypeptide reads, in one-letter code: DNA mismatch repair protein MutL (674 aa).

The protein belongs to the DNA mismatch repair MutL/HexB family.

Its function is as follows. This protein is involved in the repair of mismatches in DNA. It is required for dam-dependent methyl-directed DNA mismatch repair. May act as a 'molecular matchmaker', a protein that promotes the formation of a stable complex between two or more DNA-binding proteins in an ATP-dependent manner without itself being part of a final effector complex. The chain is DNA mismatch repair protein MutL from Clostridium perfringens (strain ATCC 13124 / DSM 756 / JCM 1290 / NCIMB 6125 / NCTC 8237 / Type A).